The sequence spans 1150 residues: PAN2-PAN3 deadenylation complex catalytic subunit PAN2 (1150 aa).

WD repeat units lie at residues 26-67, 114-156, 158-194, and 290-328; these read AHHS…MEFQ, GHVN…ITKE, PAPN…VINT, and GHTH…VSFV. A linker region spans residues 326-471; that stretch reads SFVDQGLPVE…IRTDIESLKS (146 aa). The region spanning 472-862 is the USP domain; it reads VVPNMYHLFE…TPLVVMFQLK (391 aa). An Exonuclease domain is found at 911 to 1079; that stretch reads AIDAEFVLAK…HDSIEDANTA (169 aa). A divalent metal cation is bound by residues Asp-913, Glu-915, Asp-1022, and Asp-1075. Residues 1118-1150 are disordered; the sequence is GQSAQRTETPPMVDDAQPGALLPYQPPELLQGS.

The protein belongs to the peptidase C19 family. PAN2 subfamily. As to quaternary structure, forms a heterotrimer with an asymmetric homodimer of the regulatory subunit PAN3 to form the poly(A)-nuclease (PAN) deadenylation complex. Requires a divalent metal cation as cofactor.

Its subcellular location is the cytoplasm. The catalysed reaction is Exonucleolytic cleavage of poly(A) to 5'-AMP.. Its activity is regulated as follows. Positively regulated by the regulatory subunit PAN3. In terms of biological role, catalytic subunit of the poly(A)-nuclease (PAN) deadenylation complex, one of two cytoplasmic mRNA deadenylases involved in mRNA turnover. PAN specifically shortens poly(A) tails of RNA and the activity is stimulated by poly(A)-binding protein PAB1. PAN deadenylation is followed by rapid degradation of the shortened mRNA tails by the CCR4-NOT complex. Deadenylated mRNAs are then degraded by two alternative mechanisms, namely exosome-mediated 3'-5' exonucleolytic degradation, or deadenylation-dependent mRNA decaping and subsequent 5'-3' exonucleolytic degradation by XRN1. May also be involved in post-transcriptional maturation of mRNA poly(A) tails. The sequence is that of PAN2-PAN3 deadenylation complex catalytic subunit PAN2 from Pyricularia oryzae (strain 70-15 / ATCC MYA-4617 / FGSC 8958) (Rice blast fungus).